Consider the following 477-residue polypeptide: Stromelysin-1 (477 aa).

A signal peptide spans 1 to 17 (MKGLPVLLWLCVVVCSS). A propeptide spans 18-99 (YPLHDSARDD…PRCGVPDVGG (82 aa)) (activation peptide). The Cysteine switch motif lies at 90–97 (PRCGVPDV). C92 is a Zn(2+) binding site. Residues D124 and D158 each coordinate Ca(2+). Residues H168 and D170 each coordinate Zn(2+). Ca(2+) is bound by residues D175, G176, G178, and V180. Residue H183 coordinates Zn(2+). 3 residues coordinate Ca(2+): G190, N192, and D194. Residue H196 coordinates Zn(2+). D198, D199, and E201 together coordinate Ca(2+). Residue H218 participates in Zn(2+) binding. E219 is an active-site residue. Positions 222 and 228 each coordinate Zn(2+). Hemopexin repeat units follow at residues 287-336 (SPMC…WPSL), 337-383 (PSNM…GLPA), 385-433 (VKKI…FPGV), and 434-477 (DSRV…WFNC). An intrachain disulfide couples C290 to C477. D297 serves as a coordination point for Ca(2+). Residues D389 and D438 each coordinate Ca(2+).

This sequence belongs to the peptidase M10A family. Requires Ca(2+) as cofactor. Zn(2+) serves as cofactor.

The protein localises to the secreted. Its subcellular location is the extracellular space. The protein resides in the extracellular matrix. It carries out the reaction Preferential cleavage where P1', P2' and P3' are hydrophobic residues.. In terms of biological role, metalloproteinase with a rather broad substrate specificity that can degrade fibronectin, laminin, gelatins of type I, III, IV, and V; collagens III, IV, X, and IX, and cartilage proteoglycans. Activates different molecules including growth factors, plasminogen or other matrix metalloproteinases such as MMP9. Once released into the extracellular matrix (ECM), the inactive pro-enzyme is activated by the plasmin cascade signaling pathway. Also acts intracellularly. For example, in dopaminergic neurons, gets activated by the serine protease HTRA2 upon stress and plays a pivotal role in DA neuronal degeneration by mediating microglial activation and alpha-synuclein/SNCA cleavage. In addition, plays a role in immune response and possesses antiviral activity against various viruses. Mechanistically, translocates from the cytoplasm into the cell nucleus upon virus infection to influence NF-kappa-B activities. The sequence is that of Stromelysin-1 (Mmp3) from Mus musculus (Mouse).